We begin with the raw amino-acid sequence, 504 residues long: Zinc finger CCCH-type with G patch domain-containing protein (504 aa).

Residues 95–121 (LSEDSNEVKPNPDTDEENEEEEQDISG) form a disordered region. Over residues 107–118 (DTDEENEEEEQD) the composition is skewed to acidic residues. The segment at 165 to 191 (KSMKPCGFYLEGKCRFMDNCRYSHGEV) adopts a C3H1-type zinc-finger fold. Positions 308–354 (TRGIGSKLLMKMGYELGKGLGKTLSGRVEPVQAVVLPKGHSLDICAE) constitute a G-patch domain.

The protein localises to the nucleus. Transcription repressor that specifically binds the 5'-GGAG[GA]A[GA]A-3' consensus sequence. Represses transcription by recruiting the chromatin multiprotein complex NuRD to target promoters. Negatively regulates expression of EGFR, a gene involved in cell proliferation, survival and migration. The sequence is that of Zinc finger CCCH-type with G patch domain-containing protein (zgpat) from Danio rerio (Zebrafish).